Reading from the N-terminus, the 244-residue chain is Phosphoadenosine 5'-phosphosulfate reductase (244 aa).

The active-site Nucleophile; cysteine thiosulfonate intermediate is the cysteine 239.

It belongs to the PAPS reductase family. CysH subfamily.

Its subcellular location is the cytoplasm. The catalysed reaction is [thioredoxin]-disulfide + sulfite + adenosine 3',5'-bisphosphate + 2 H(+) = [thioredoxin]-dithiol + 3'-phosphoadenylyl sulfate. The protein operates within sulfur metabolism; hydrogen sulfide biosynthesis; sulfite from sulfate: step 3/3. Catalyzes the formation of sulfite from phosphoadenosine 5'-phosphosulfate (PAPS) using thioredoxin as an electron donor. This Pectobacterium atrosepticum (strain SCRI 1043 / ATCC BAA-672) (Erwinia carotovora subsp. atroseptica) protein is Phosphoadenosine 5'-phosphosulfate reductase.